The chain runs to 456 residues: Cysteine synthase 2 (456 aa).

Residues 9 to 29 form a helical membrane-spanning segment; that stretch reads VYGTVALTAAFAAGILVTLGF.

Belongs to the cysteine synthase/cystathionine beta-synthase family. The cofactor is pyridoxal 5'-phosphate.

Its subcellular location is the mitochondrion outer membrane. The catalysed reaction is O-acetyl-L-serine + hydrogen sulfide = L-cysteine + acetate. Its function is as follows. Putative cysteine synthase that catalyzes the conversion of O-acetyl-L-serine (OAS) into cysteine, the last step in the cysteine biosynthesis pathway. However, in contrast to cysteine synthase cys-17, this CS-like protein may not function in cysteine biosynthesis. This chain is Cysteine synthase 2, found in Neurospora crassa (strain ATCC 24698 / 74-OR23-1A / CBS 708.71 / DSM 1257 / FGSC 987).